The chain runs to 104 residues: Nucleoid-associated protein GAU_1113 (104 aa).

Belongs to the YbaB/EbfC family. As to quaternary structure, homodimer.

Its subcellular location is the cytoplasm. It localises to the nucleoid. Functionally, binds to DNA and alters its conformation. May be involved in regulation of gene expression, nucleoid organization and DNA protection. This Gemmatimonas aurantiaca (strain DSM 14586 / JCM 11422 / NBRC 100505 / T-27) protein is Nucleoid-associated protein GAU_1113.